The primary structure comprises 676 residues: DNA ligase (676 aa).

Residues 34-38 (DQEFD), 83-84 (SL), and E117 contribute to the NAD(+) site. K119 serves as the catalytic N6-AMP-lysine intermediate. Residues R140, E177, K285, and K309 each coordinate NAD(+). Zn(2+) contacts are provided by C403, C406, C427, and C434. Residues 595 to 676 (NNNGLLKNKT…EWLKMLNKSG (82 aa)) enclose the BRCT domain.

This sequence belongs to the NAD-dependent DNA ligase family. LigA subfamily. Requires Mg(2+) as cofactor. Mn(2+) serves as cofactor.

It catalyses the reaction NAD(+) + (deoxyribonucleotide)n-3'-hydroxyl + 5'-phospho-(deoxyribonucleotide)m = (deoxyribonucleotide)n+m + AMP + beta-nicotinamide D-nucleotide.. DNA ligase that catalyzes the formation of phosphodiester linkages between 5'-phosphoryl and 3'-hydroxyl groups in double-stranded DNA using NAD as a coenzyme and as the energy source for the reaction. It is essential for DNA replication and repair of damaged DNA. This Pelagibacter ubique (strain HTCC1062) protein is DNA ligase.